The chain runs to 326 residues: tRNA-modifying protein YgfZ (326 aa).

Folate-binding residues include W27 and W189.

The protein belongs to the tRNA-modifying YgfZ family.

It localises to the cytoplasm. In terms of biological role, folate-binding protein involved in regulating the level of ATP-DnaA and in the modification of some tRNAs. It is probably a key factor in regulatory networks that act via tRNA modification, such as initiation of chromosomal replication. This is tRNA-modifying protein YgfZ from Salmonella typhimurium (strain LT2 / SGSC1412 / ATCC 700720).